The chain runs to 549 residues: Undecaprenyl phosphate-alpha-4-amino-4-deoxy-L-arabinose arabinosyl transferase 1 (549 aa).

12 helical membrane passes run Leu9–Ile29, Leu80–Ala102, Ser112–Ala132, Asn133–Phe153, Phe176–Ile196, Leu204–Leu224, Trp257–Ala277, Ser290–Gly310, Leu312–Val332, Leu342–Val362, His377–Met397, and Leu402–Pro422.

Belongs to the glycosyltransferase 83 family.

The protein localises to the cell inner membrane. It catalyses the reaction 4-amino-4-deoxy-alpha-L-arabinopyranosyl di-trans,octa-cis-undecaprenyl phosphate + lipid IVA = lipid IIA + di-trans,octa-cis-undecaprenyl phosphate.. It participates in lipopolysaccharide metabolism; 4-amino-4-deoxy-beta-L-arabinose-lipid A biosynthesis. Catalyzes the transfer of the L-Ara4N moiety of the glycolipid undecaprenyl phosphate-alpha-L-Ara4N to lipid A. The modified arabinose is attached to lipid A and is required for resistance to polymyxin and cationic antimicrobial peptides. The chain is Undecaprenyl phosphate-alpha-4-amino-4-deoxy-L-arabinose arabinosyl transferase 1 from Pseudomonas fluorescens (strain ATCC BAA-477 / NRRL B-23932 / Pf-5).